We begin with the raw amino-acid sequence, 342 residues long: MKKQWIAGAFGLTAALAGLVSVPQSALAWPSFAAGYEEARESSGKIVCANCHLAVKPTEIEVPQSVLPGKVFDLKIHVPYDTKIQQVGADGSPAPMQIGAYIQLPEGFTVADEKEWSAEAKESIEKYGGVTPLYADKPERSNILIINQIDGSTVPGQEFIVPVKPPDPNAKDAKVNFGKYGVYVGANRGRGQVYSNGVASNTAQYNAPVAGTISAVQTGVTFTDKLQYGLGTEATDFEYTNGTRVTITDEKGKASIVNIPPGPKLLDTVKQGAQIKAGQPLTNDPNVGGYGQEERDIVLQDPQRVTWLVAFLAAAFICQLLLVLKKKQVEKVQEFEAQKQGL.

The signal sequence occupies residues M1–A28. Heme-binding residues include C48, C51, and H52. The chain crosses the membrane as a helical span at residues V305–K325.

This sequence belongs to the cytochrome f family. In terms of assembly, the 4 large subunits of the cytochrome b6-f complex are cytochrome b6, subunit IV (17 kDa polypeptide, PetD), cytochrome f and the Rieske protein, while the 4 small subunits are PetG, PetL, PetM and PetN. The complex functions as a dimer. The cofactor is heme.

It is found in the cell inner membrane. Functionally, component of the cytochrome b6-f complex, which mediates electron transfer between photosystem II (PSII) and photosystem I (PSI), cyclic electron flow around PSI, and state transitions. The chain is Cytochrome f (petA) from Gloeobacter violaceus (strain ATCC 29082 / PCC 7421).